Here is a 211-residue protein sequence, read N- to C-terminus: Large ribosomal subunit protein uL4 (211 aa).

Disordered stretches follow at residues 1–28 (MAQA…ETEP) and 48–99 (TAST…GPRY). The segment covering 10–28 (RTGRRSEMELKGPRFETEP) has biased composition (basic and acidic residues).

The protein belongs to the universal ribosomal protein uL4 family. As to quaternary structure, part of the 50S ribosomal subunit.

Its function is as follows. One of the primary rRNA binding proteins, this protein initially binds near the 5'-end of the 23S rRNA. It is important during the early stages of 50S assembly. It makes multiple contacts with different domains of the 23S rRNA in the assembled 50S subunit and ribosome. Functionally, forms part of the polypeptide exit tunnel. The sequence is that of Large ribosomal subunit protein uL4 from Rubrobacter xylanophilus (strain DSM 9941 / JCM 11954 / NBRC 16129 / PRD-1).